We begin with the raw amino-acid sequence, 601 residues long: Cdc42-interacting protein 4 (601 aa).

Residues 1 to 117 are required for podosome formation and interaction with AKAP9 and microtubules; that stretch reads MDWGTELWDQ…EMKQERKMHF (117 aa). Positions 1–117 are required for translocation to the plasma membrane in response to insulin; sequence MDWGTELWDQ…EMKQERKMHF (117 aa). The F-BAR domain maps to 1–264; it reads MDWGTELWDQ…AANAVDPKND (264 aa). The stretch at 67-259 forms a coiled coil; that stretch reads FSQQQSFVQI…EGMKVAANAV (193 aa). Disordered stretches follow at residues 280-358, 390-420, and 479-543; these read GDVE…GRDP, DFSH…EVDQ, and RGDS…SPIG. The segment covering 289–302 has biased composition (polar residues); that stretch reads QPMNRAPSDSSLGT. An interaction with CDC42 region spans residues 293 to 537; that stretch reads RAPSDSSLGT…TEFDEDFEEE (245 aa). The tract at residues 293–601 is interaction with PDE6G; that stretch reads RAPSDSSLGT…PTSYLRVTLN (309 aa). S296, S298, and S299 each carry phosphoserine. Positions 314 to 329 are enriched in basic residues; sequence GRSRTKRWPFGKKNKP. S335 is subject to Phosphoserine. A compositionally biased stretch (low complexity) spans 336-346; sequence PLGGPVPSALP. S351 carries the phosphoserine modification. The stretch at 388-481 forms a coiled coil; sequence TEDFSHLPPE…ESRVLSNRGD (94 aa). The region spanning 393–470 is the REM-1 domain; the sequence is HLPPEQQRKR…VQKYEAWLAE (78 aa). Residues 407 to 420 show a composition bias toward basic and acidic residues; sequence LEERSRELQKEVDQ. Positions 471–601 are required for interaction with FASLG and localization to lysosomes; it reads AESRVLSNRG…PTSYLRVTLN (131 aa). S482 is subject to Phosphoserine. Residues 487–541 form an interaction with DNM2 and WASL region; the sequence is ARPPDPPASAPPDSSSNSASQDTKESSEEPPSEESQDTPIYTEFDEDFEEEPTSP. Low complexity predominate over residues 497–506; sequence PPDSSSNSAS. The segment covering 529–538 has biased composition (acidic residues); that stretch reads EFDEDFEEEP. The segment at 529–601 is interaction with DNM1 and WASL; the sequence is EFDEDFEEEP…PTSYLRVTLN (73 aa). Residues 538–601 are required for podosome formation; it reads PTSPIGHCVA…PTSYLRVTLN (64 aa). Residues 540–601 form the SH3 domain; the sequence is SPIGHCVAIY…PTSYLRVTLN (62 aa). Residues 544–601 form an interaction with WAS region; it reads HCVAIYHFEGSSEGTISMAEGEDLSLMEEDKGDGWTRVRRKEGGEGYVPTSYLRVTLN. The interaction with ARHGAP17, DAAM1, DIAPH1 and DIAPH2 stretch occupies residues 546-601; that stretch reads VAIYHFEGSSEGTISMAEGEDLSLMEEDKGDGWTRVRRKEGGEGYVPTSYLRVTLN.

It belongs to the FNBP1 family. As to quaternary structure, interacts specifically with GTP-bound RHOQ. Interacts with DNM2 and PDE6G. Homodimerizes, the dimers can polymerize end-to-end to form filamentous structures. Interacts specifically with GTP-bound CDC42. Interacts with AKAP9, ARHGAP17, DAAM1, DIAPH1, DIAPH2, DNM1, FASLG/FASL, GAPVD1, LYN, microtubules, SRC, WAS/WASP and WASL/N-WASP. Interacts with the ligand binding domain of the thyroid receptor (TR) in the presence of thyroid hormone. May interact with CTNNB1 and HD/HTT. In terms of processing, tyrosine phosphorylated. Also phosphorylated by PKA. As to expression, expressed in brain, colon, heart, kidney, liver, lung, megakaryocyte, ovary, pancreas, peripheral blood lymphocytes, placenta, prostate, skeletal muscle, small intestine, spleen, testis, thymus and trachea.

The protein resides in the cytoplasm. It is found in the cytoskeleton. The protein localises to the cell cortex. It localises to the lysosome. Its subcellular location is the golgi apparatus. The protein resides in the cell membrane. It is found in the cell projection. The protein localises to the phagocytic cup. It localises to the perinuclear region. Its function is as follows. Required for translocation of GLUT4 to the plasma membrane in response to insulin signaling. Required to coordinate membrane tubulation with reorganization of the actin cytoskeleton during endocytosis. Binds to lipids such as phosphatidylinositol 4,5-bisphosphate and phosphatidylserine and promotes membrane invagination and the formation of tubules. Also promotes CDC42-induced actin polymerization by recruiting WASL/N-WASP which in turn activates the Arp2/3 complex. Actin polymerization may promote the fission of membrane tubules to form endocytic vesicles. Required for the formation of podosomes, actin-rich adhesion structures specific to monocyte-derived cells. May be required for the lysosomal retention of FASLG/FASL. The sequence is that of Cdc42-interacting protein 4 (TRIP10) from Homo sapiens (Human).